The following is a 403-amino-acid chain: ESX-5 secretion system protein EccE5 (403 aa).

2 helical membrane passes run 9–29 (LALS…ILIV) and 43–63 (IAWW…VVTY).

This sequence belongs to the EccE family. As to quaternary structure, part of the ESX-5 / type VII secretion system (T7SS), which is composed of cytosolic and membrane components. The ESX-5 membrane complex is composed of EccB5, EccC5, EccD5 and EccE5.

Its subcellular location is the cell inner membrane. Its function is as follows. Part of the ESX-5 specialized secretion system, which is responsible for the secretion of EsxN and a number of PE_PGRS and PPE proteins. This Mycobacterium marinum (strain ATCC BAA-535 / M) protein is ESX-5 secretion system protein EccE5.